Reading from the N-terminus, the 930-residue chain is Isoleucine--tRNA ligase (930 aa).

The 'HIGH' region motif lies at 57 to 67 (PYANGNIHVGH). Glutamate 554 contributes to the L-isoleucyl-5'-AMP binding site. Positions 595-599 (KMSKS) match the 'KMSKS' region motif. Residue lysine 598 coordinates ATP.

The protein belongs to the class-I aminoacyl-tRNA synthetase family. IleS type 1 subfamily. As to quaternary structure, monomer.

Its subcellular location is the cytoplasm. The enzyme catalyses tRNA(Ile) + L-isoleucine + ATP = L-isoleucyl-tRNA(Ile) + AMP + diphosphate. Functionally, catalyzes the attachment of isoleucine to tRNA(Ile). As IleRS can inadvertently accommodate and process structurally similar amino acids such as valine, to avoid such errors it has two additional distinct tRNA(Ile)-dependent editing activities. One activity is designated as 'pretransfer' editing and involves the hydrolysis of activated Val-AMP. The other activity is designated 'posttransfer' editing and involves deacylation of mischarged Val-tRNA(Ile). The sequence is that of Isoleucine--tRNA ligase from Streptococcus agalactiae serotype III (strain NEM316).